A 506-amino-acid chain; its full sequence is uncharacterized protein (506 aa).

The protein to group II intron maturases.

It localises to the plastid. The protein resides in the chloroplast. This is an uncharacterized protein from Euglena gracilis.